The sequence spans 365 residues: Succinyl-diaminopimelate desuccinylase (365 aa).

His65 is a binding site for Zn(2+). Asp67 is a catalytic residue. Asp96 is a binding site for Zn(2+). Glu126 acts as the Proton acceptor in catalysis. Residues Glu127, Glu155, and His340 each contribute to the Zn(2+) site.

This sequence belongs to the peptidase M20A family. DapE subfamily. Homodimer. Requires Zn(2+) as cofactor. Co(2+) serves as cofactor.

The enzyme catalyses N-succinyl-(2S,6S)-2,6-diaminopimelate + H2O = (2S,6S)-2,6-diaminopimelate + succinate. Its pathway is amino-acid biosynthesis; L-lysine biosynthesis via DAP pathway; LL-2,6-diaminopimelate from (S)-tetrahydrodipicolinate (succinylase route): step 3/3. Catalyzes the hydrolysis of N-succinyl-L,L-diaminopimelic acid (SDAP), forming succinate and LL-2,6-diaminopimelate (DAP), an intermediate involved in the bacterial biosynthesis of lysine and meso-diaminopimelic acid, an essential component of bacterial cell walls. This chain is Succinyl-diaminopimelate desuccinylase, found in Campylobacter jejuni subsp. jejuni serotype O:2 (strain ATCC 700819 / NCTC 11168).